Reading from the N-terminus, the 130-residue chain is Protein ApaG (130 aa).

The 125-residue stretch at 3–127 (KAETRGISVT…FSLDSPHVRR (125 aa)) folds into the ApaG domain.

This is Protein ApaG from Methylobacterium radiotolerans (strain ATCC 27329 / DSM 1819 / JCM 2831 / NBRC 15690 / NCIMB 10815 / 0-1).